The primary structure comprises 460 residues: Muscarinic acetylcholine receptor M1 (460 aa).

The Extracellular portion of the chain corresponds to 1 to 22; it reads MNTSVPPAVSPNITVLAPGKGP. 2 N-linked (GlcNAc...) asparagine glycosylation sites follow: asparagine 2 and asparagine 12. The chain crosses the membrane as a helical span at residues 23 to 48; sequence WQVAFIGITTGLLSLATVTGNLLVLI. Residues 49-62 are Cytoplasmic-facing; that stretch reads SFKVNTELKTVNNY. A helical membrane pass occupies residues 63 to 84; the sequence is FLLSLACADLIIGTFSMNLYTT. The Extracellular segment spans residues 85-95; sequence YLLMGHWALGT. The helical transmembrane segment at 96-121 threads the bilayer; the sequence is LACDLWLALDYVASNASVMNLLLISF. Cysteine 98 and cysteine 178 are joined by a disulfide. The Cytoplasmic portion of the chain corresponds to 122–142; the sequence is DRYFSVTRPLSYRAKRTPRRA. A helical transmembrane segment spans residues 143-164; it reads ALMIGLAWLVSFVLWAPAILFW. Topologically, residues 165 to 185 are extracellular; the sequence is QYLVGERTVLAGQCYIQFLSQ. A helical membrane pass occupies residues 186–209; the sequence is PIITFGTAMAAFYLPVTVMCTLYW. Residues 210–366 are Cytoplasmic-facing; the sequence is RIYRETENRA…LVKEKKAART (157 aa). 3 disordered regions span residues 225–257, 274–297, and 310–351; these read LQGSETPGKGGGSSSSSERSQPGAEGSPESPPG, WKEEEEEDEGSMESLTSSEGEEPG, and EAQA…QLAK. Phosphothreonine is present on threonine 230. Over residues 238 to 257 the composition is skewed to low complexity; sequence SSSSERSQPGAEGSPESPPG. Serine 254 is subject to Phosphoserine. Over residues 328–343 the composition is skewed to basic residues; that stretch reads RPTKKGRDRGGKGQKP. Residues 367-390 form a helical membrane-spanning segment; that stretch reads LSAILLAFILTWTPYNIMVLVSTF. Topologically, residues 391 to 397 are extracellular; it reads CKDCVPE. Residues 398 to 420 form a helical membrane-spanning segment; it reads TLWELGYWLCYVNSTVNPMCYAL. The Cytoplasmic portion of the chain corresponds to 421–460; the sequence is CNKAFRDTFRLLLLCRWDKRRWRKIPKRPGSVHRTPSRQC. A Phosphoserine modification is found at serine 451. Phosphothreonine is present on threonine 455. Residue serine 457 is modified to Phosphoserine.

The protein belongs to the G-protein coupled receptor 1 family. Muscarinic acetylcholine receptor subfamily. CHRM1 sub-subfamily. As to quaternary structure, interacts with GPRASP2. Interacts with TMEM147.

The protein localises to the cell membrane. It localises to the postsynaptic cell membrane. Functionally, the muscarinic acetylcholine receptor mediates various cellular responses, including inhibition of adenylate cyclase, breakdown of phosphoinositides and modulation of potassium channels through the action of G proteins. Primary transducing effect is Pi turnover. This chain is Muscarinic acetylcholine receptor M1 (Chrm1), found in Mus musculus (Mouse).